Consider the following 274-residue polypeptide: Bis(5'-nucleosyl)-tetraphosphatase, symmetrical (274 aa).

This sequence belongs to the Ap4A hydrolase family.

The enzyme catalyses P(1),P(4)-bis(5'-adenosyl) tetraphosphate + H2O = 2 ADP + 2 H(+). Hydrolyzes diadenosine 5',5'''-P1,P4-tetraphosphate to yield ADP. The chain is Bis(5'-nucleosyl)-tetraphosphatase, symmetrical from Janthinobacterium sp. (strain Marseille) (Minibacterium massiliensis).